The following is a 621-amino-acid chain: tRNA uridine 5-carboxymethylaminomethyl modification enzyme MnmG (621 aa).

FAD is bound at residue 9-14; the sequence is GGGHAG. NAD(+) is bound at residue 270–284; it reads GPRYCPSIEDKIVKF.

It belongs to the MnmG family. In terms of assembly, homodimer. Heterotetramer of two MnmE and two MnmG subunits. FAD is required as a cofactor.

The protein localises to the cytoplasm. Functionally, NAD-binding protein involved in the addition of a carboxymethylaminomethyl (cmnm) group at the wobble position (U34) of certain tRNAs, forming tRNA-cmnm(5)s(2)U34. The sequence is that of tRNA uridine 5-carboxymethylaminomethyl modification enzyme MnmG from Borreliella afzelii (strain PKo) (Borrelia afzelii).